The chain runs to 480 residues: 3,6-anhydro-alpha-L-galactose dehydrogenase (480 aa).

Residues 149–150 (WN), 173–176 (KPTS), and 226–227 (GS) contribute to the NADP(+) site. Glu-248 functions as the Proton acceptor in the catalytic mechanism. Leu-249 contributes to the NADP(+) binding site. Cys-282 functions as the Nucleophile in the catalytic mechanism. Glu-383 provides a ligand contact to NADP(+).

The protein belongs to the aldehyde dehydrogenase family.

It carries out the reaction 3,6-anhydro-alpha-L-galactopyranose + NADP(+) + H2O = 3,6-anhydro-L-galactonate + NADPH + 2 H(+). The catalysed reaction is 3,6-anhydro-alpha-L-galactopyranose + NAD(+) + H2O = 3,6-anhydro-L-galactonate + NADH + 2 H(+). Involved in the degradation of 3,6-anhydro-L-galactose, which is the major monomeric sugar of red macroalgae. Catalyzes the oxidation of 3,6-anhydro-L-galactose (AHG) to form 3,6-anhydrogalactonate (AHGA). The sequence is that of 3,6-anhydro-alpha-L-galactose dehydrogenase from Vibrio sp. (strain EJY3).